A 181-amino-acid chain; its full sequence is uncharacterized protein (181 aa).

Composition is skewed to gly residues over residues 143–156 and 170–181; these read RRGG…GPRG and GPFGPGYRGPRF. The interval 143-181 is disordered; sequence RRGGRYGDFGGPRGPRGPRNDGPFGPFGPFGPGYRGPRF.

Has been detected in a cytochrome bc1-aa3 supercomplex; its deletion however leaves complex activity unaffected.

This is an uncharacterized protein from Corynebacterium glutamicum (strain ATCC 13032 / DSM 20300 / JCM 1318 / BCRC 11384 / CCUG 27702 / LMG 3730 / NBRC 12168 / NCIMB 10025 / NRRL B-2784 / 534).